We begin with the raw amino-acid sequence, 1029 residues long: Putative B3 domain-containing protein Os03g0621600 (1029 aa).

3 DNA-binding regions (TF-B3) span residues 147 to 240 (DTYF…FDPS), 339 to 430 (VAVM…RKMK), and 450 to 543 (EKYF…FDPS). The disordered stretch occupies residues 572–605 (TSYHDQPKGNKHWMQKDSSSKGNKIGNTRSSNTP). The span at 591-605 (SKGNKIGNTRSSNTP) shows a compositional bias: polar residues. The segment at residues 731-824 (YKNFFKVMIG…KLKVLIFGPS (94 aa)) is a DNA-binding region (TF-B3 4). Over residues 852–867 (SSNSHDLPVKSPQNVS) the composition is skewed to polar residues. Positions 852–882 (SSNSHDLPVKSPQNVSKSEKQWDSSEQENDT) are disordered. Residues 934–1029 (GCILRKSRVH…SMNVHIIPKK (96 aa)) constitute a DNA-binding region (TF-B3 5).

It is found in the nucleus. The protein is Putative B3 domain-containing protein Os03g0621600 of Oryza sativa subsp. japonica (Rice).